The chain runs to 176 residues: Late embryogenesis abundant protein 49 (176 aa).

SMP domains are found at residues 49 to 106 (TTLT…RNQK) and 115 to 171 (NLGD…KLNH).

The protein belongs to the LEA type SMP family.

It localises to the cytoplasm. The protein resides in the nucleus. In terms of biological role, LEA proteins are late embryonic proteins abundant in higher plant seed embryos. The function of those proteins is not known. This is Late embryogenesis abundant protein 49 from Arabidopsis thaliana (Mouse-ear cress).